A 223-amino-acid chain; its full sequence is Serum amyloid P-component (223 aa).

The first 19 residues, 1-19 (MDKMLFWVSVFTIFLDVFA), serve as a signal peptide directing secretion. The Pentraxin (PTX) domain occupies 24 to 223 (DKKVFVFPRE…YVIIKPRVWD (200 aa)). A disulfide bridge links Cys55 with Cys114. Ca(2+)-binding residues include Asp77, Asn78, Glu155, Gln156, Asp157, and Gln167. Residue Asn198 is glycosylated (N-linked (GlcNAc...) asparagine).

Belongs to the pentraxin family. In terms of assembly, homopentamer. Pentraxin (or pentaxin) have a discoid arrangement of 5 non-covalently bound subunits. Requires Ca(2+) as cofactor.

The protein localises to the secreted. This Cavia porcellus (Guinea pig) protein is Serum amyloid P-component (PTX2).